The following is a 591-amino-acid chain: Frizzled-9 (591 aa).

Positions 1–22 (MAVAPLRGALLLWQLLAAGGAA) are cleaved as a signal peptide. At 23 to 229 (LEIGRFDPER…EVFWSRRDKD (207 aa)) the chain is on the extracellular side. The 122-residue stretch at 34 to 155 (RGAAPCQAVE…NDPHALCMEA (122 aa)) folds into the FZ domain. Intrachain disulfides connect cysteine 39–cysteine 100, cysteine 47–cysteine 93, cysteine 84–cysteine 122, cysteine 111–cysteine 152, and cysteine 115–cysteine 139. Asparagine 53 carries an N-linked (GlcNAc...) asparagine glycan. The segment at 58-172 (PNLLGHTSQG…PAEPHKGLGM (115 aa)) is required for Wnt-activated receptor activity. Asparagine 158 carries N-linked (GlcNAc...) asparagine glycosylation. The helical transmembrane segment at 230–250 (FALVWMAVWSALCFFSTAFTV) threads the bilayer. The Cytoplasmic portion of the chain corresponds to 251–266 (LTFLLEPHRFQYPERP). Residues 267–287 (IIFLSMCYNVYSLAFLIRAVA) form a helical membrane-spanning segment. Over 288–315 (GAQSVACDQEAGALYVIQEGLENTGCTL) the chain is Extracellular. The chain crosses the membrane as a helical span at residues 316-336 (VFLLLYYFGMASSLWWVVLTL). Residues 337–355 (TWFLAAGKKWGHEAIEAHG) are Cytoplasmic-facing. Residues 356 to 376 (SYFHMAAWGLPALKTIVILTL) traverse the membrane as a helical segment. At 377–400 (RKVAGDELTGLCYVASTDAAALTG) the chain is on the extracellular side. A helical membrane pass occupies residues 401-421 (FVLVPLSGYLVLGSSFLLTGF). The Cytoplasmic portion of the chain corresponds to 422 to 447 (VALFHIRKIMKTGGTNTEKLEKLMVK). The helical transmembrane segment at 448–468 (IGVFSILYTVPATCVIVCYVY) threads the bilayer. Residues 469-508 (ERLNMDFWRLRATEQPCAAAAGPGGRRDCSLPGGSVPTVA) lie on the Extracellular side of the membrane. The chain crosses the membrane as a helical span at residues 509–529 (VFMLKIFMSLVVGITSGVWVW). The Cytoplasmic segment spans residues 530 to 591 (SSKTFQTWQS…DPSLENPTHL (62 aa)). The Lys-Thr-X-X-X-Trp motif, mediates interaction with the PDZ domain of Dvl family members signature appears at 532 to 537 (KTFQTW). Positions 554–591 (ACRAPGSYGRGTHCHYKAPTVVLHMTKTDPSLENPTHL) are required for CTNNB1 accumulation and TCF transcription factor activity.

This sequence belongs to the G-protein coupled receptor Fz/Smo family. Ubiquitinated by ZNRF3, leading to its degradation by the proteasome. Expressed predominantly in adult and fetal brain, testis, eye, skeletal muscle and kidney. Moderately expressed in pancreas, thyroid, adrenal cortex, small intestine and stomach. Detected in fetal liver and kidney. Expressed in neural progenitor cells.

The protein resides in the cell membrane. Functionally, receptor for WNT2 that is coupled to the beta-catenin canonical signaling pathway, which leads to the activation of disheveled proteins, inhibition of GSK-3 kinase, nuclear accumulation of beta-catenin and activation of Wnt target genes. Plays a role in neuromuscular junction (NMJ) assembly by negatively regulating the clustering of acetylcholine receptors (AChR) through the beta-catenin canonical signaling pathway. May play a role in neural progenitor cells (NPCs) viability through the beta-catenin canonical signaling pathway by negatively regulating cell cycle arrest leading to inhibition of neuron apoptotic process. During hippocampal development, regulates neuroblast proliferation and apoptotic cell death. Controls bone formation through non canonical Wnt signaling mediated via ISG15. Positively regulates bone regeneration through non canonical Wnt signaling. The protein is Frizzled-9 (FZD9) of Homo sapiens (Human).